The primary structure comprises 500 residues: NAD(P)H-quinone oxidoreductase chain 4, chloroplastic (500 aa).

Helical transmembrane passes span 4-24 (FPWLTIIVVFPISAGSLMLFL), 35-55 (YTICICILELLLTTYAFCYNF), 87-107 (IGTILLTGFITTLATLAAFPV), 113-130 (FFHFLMLAMYSGQIGSFS), 134-154 (LLLFFIMWELELIPVYLLLSM), 167-187 (FILYTAGSSIFLLIGVLGISL), 211-231 (ILFYIGFLIAFAVKSPIIPLH), 242-262 (HYSTCMLLAGILLKMGAYGLV), 272-292 (AHSMFSPWLLVVGTIQIIYAA), 305-325 (IAYSSVSHMGFIIIGISSITD), 330-350 (GAILQIISHGFIGAALFFLAG), 386-406 (LALPGMSGFIAEFIVFFGIIT), 416-436 (IFIIFVMAIGMILTPIYLLSM), and 462-482 (LFLSISILLPIIGIGIYPDFV).

This sequence belongs to the complex I subunit 4 family.

It localises to the plastid. The protein localises to the chloroplast thylakoid membrane. It catalyses the reaction a plastoquinone + NADH + (n+1) H(+)(in) = a plastoquinol + NAD(+) + n H(+)(out). The enzyme catalyses a plastoquinone + NADPH + (n+1) H(+)(in) = a plastoquinol + NADP(+) + n H(+)(out). This chain is NAD(P)H-quinone oxidoreductase chain 4, chloroplastic (ndhD), found in Arabidopsis thaliana (Mouse-ear cress).